The following is a 305-amino-acid chain: Elongation factor Ts (305 aa).

The interval 79-82 (TDFV) is involved in Mg(2+) ion dislocation from EF-Tu.

The protein belongs to the EF-Ts family.

It is found in the cytoplasm. Functionally, associates with the EF-Tu.GDP complex and induces the exchange of GDP to GTP. It remains bound to the aminoacyl-tRNA.EF-Tu.GTP complex up to the GTP hydrolysis stage on the ribosome. This chain is Elongation factor Ts, found in Brucella suis biovar 1 (strain 1330).